The following is a 438-amino-acid chain: MSKNVVIIGTQWGDEGKGKIVDLISDRAVSVVRFQGGHNAGHTLVIDQQTTVLHLIPSGILHDHVECLIAHGVVLSMSALLKEIAELEGANINVTERLKISPGCPLIFPYHIALDNAREAKCGKTAIGTTGNGIGPTYEDKVARRGLRAGDLLNPILFASKLKEVVEYHNFLLTNYYGTAPVDYQVILYEALSQAKKIKHMIIDVTEKIHQHIANDENILFEGAQGTLLDIDQGTYPFVTSSNTTSGGAVTGSGVGVTDINYVLGIVKAYTTRVGSGPFPTELIYNVSTNKGDAIGKVLGTVGHEFGATTGRQRRCGWLDMVTLKRSFNLNAVTGICLTKLDVLDSLISVKICVAYKLNGKEVTIPPYDAKGYTDAKPVYIEMPGWKTSTIGTNSFDSLPIEAQNYIHKIEQLANLPVDILSTGPDRTQTLILKHPFE.

Residues Gly13–Lys19 and Gly41–Thr43 each bind GTP. The active-site Proton acceptor is the Asp14. Asp14 and Gly41 together coordinate Mg(2+). IMP is bound by residues Asp14–Lys17, Asn39–His42, Thr130, Arg144, Gln225, Thr240, and Arg312. Residue His42 is the Proton donor of the active site. Residue Ala308 to Arg314 participates in substrate binding. Residues Arg314, Lys340 to Asp342, and Ser422 to Gly424 contribute to the GTP site.

It belongs to the adenylosuccinate synthetase family. In terms of assembly, homodimer. The cofactor is Mg(2+).

It localises to the cytoplasm. It catalyses the reaction IMP + L-aspartate + GTP = N(6)-(1,2-dicarboxyethyl)-AMP + GDP + phosphate + 2 H(+). It functions in the pathway purine metabolism; AMP biosynthesis via de novo pathway; AMP from IMP: step 1/2. Functionally, plays an important role in the de novo pathway of purine nucleotide biosynthesis. Catalyzes the first committed step in the biosynthesis of AMP from IMP. The protein is Adenylosuccinate synthetase of Vesicomyosocius okutanii subsp. Calyptogena okutanii (strain HA).